We begin with the raw amino-acid sequence, 510 residues long: MSATPKPLVLIILDGFGHSDKPEYNAIHAASTPVYDRLRATYPHGLISGSGMDVGLPDGQMGNSEVGHMNLGAGRVVYQDFTRVTKAIRDGEFFDNAAINQAVDKAVAAGKAVHILGLLSDGGVHSHQDHIVAMAELAARRGAEKIYLHAFLDGRDTPPKSAQPSIELLDAAFARLGKGRIASLTGRYFAMDRDNRWDRVEQAYHLIVDGAGQFNAASAVEGLQAAYERGESDEFVKATTIGAPVQVEDGDAVVFMNFRADRARELTRAFVEPGFQEFERKRAPQVGFVMLTQYAASIPAPAAFAPEALTNVLGEYLAKNGKTQLRIAETEKYAHVTFFFSGGREEPFEGEERILIPSPDVATYDLKPEMSAPEVTDRIVDAIENQRYDVIIVNYANGDMVGHTGVFEAAVKAVETLDTCVGRITEALQKVGGEALITADHGNVEQMEDECTGQAHTAHTCEPVPFIYVGKRPARIREGGVLADVAPTLLTLMGLPQPAEMTGKTIVELE.

Residues aspartate 14 and serine 64 each contribute to the Mn(2+) site. The active-site Phosphoserine intermediate is serine 64. Residues histidine 125, 155-156 (RD), arginine 187, arginine 193, 259-262 (RADR), and lysine 332 contribute to the substrate site. The Mn(2+) site is built by aspartate 399, histidine 403, aspartate 440, histidine 441, and histidine 459.

Belongs to the BPG-independent phosphoglycerate mutase family. Monomer. It depends on Mn(2+) as a cofactor.

The catalysed reaction is (2R)-2-phosphoglycerate = (2R)-3-phosphoglycerate. It participates in carbohydrate degradation; glycolysis; pyruvate from D-glyceraldehyde 3-phosphate: step 3/5. Functionally, catalyzes the interconversion of 2-phosphoglycerate and 3-phosphoglycerate. This is 2,3-bisphosphoglycerate-independent phosphoglycerate mutase from Ectopseudomonas mendocina (strain ymp) (Pseudomonas mendocina).